A 632-amino-acid chain; its full sequence is MQRVQPSAARVKSQKKEKAPPDVPDVILDGERKTRYEKGKFLGKGGFAHCYELRNKSTGELFAGKVVPKALLIKQYQRDKMAQEVQIHRNLQHRNVVKLYHFFEDKSNVYITLELCPRRSLMELHKRRKAVTEPEARYFTYQIVEGVLYLHNLKIVHRDLKLGNLFLNDELQVKIGDFGLATTCDNDERKKTLCGTPNYIAPEVLNKIGHSFEVDLWAIGCILYILLFGHPPFESKSLEETYSRIKNNNYVIPTSASAAASQLIRVLLDPVPSRRPNARAVCRDHFFKSGFMPARLPVSCLTMVPHLNDDEYAEENVSPSGTIDQRGPHQAGRSGLSAIPAHLVSRNSERQQTHRMEAYRQPTDCYLSNLLAQVNDLLATPTADIDDAEAALDSYQSPEALPVFWISKWVDYSDKYGIGYQLCDNSVGVLFNDNSRIMLDTAGTQLTYIEKTEKEHYFDMESAIPSGLQKKMTLLKYFRSYMNDHLLQAGQQVTRKVGDDLARLPTLRVWFRTKSAIVLHLSNGTVQINFFNDHIKMVLCPLMQAVTFIDENKRMFTYKFSHLAENGCPEKFLHRIQYAKCMIQRLVEEHTKEETKHNAPAANAVRLPSTSSNVRLESAADIQPAYPSSSRR.

The disordered stretch occupies residues 1–26 (MQRVQPSAARVKSQKKEKAPPDVPDV). A Protein kinase domain is found at 36 to 287 (YEKGKFLGKG…ARAVCRDHFF (252 aa)). ATP-binding positions include 42-50 (LGKGGFAHC) and Lys65. Residue Asp159 is the Proton acceptor of the active site. Positions 313 to 334 (AEENVSPSGTIDQRGPHQAGRS) are disordered. POLO box domains follow at residues 405–484 (WISK…YMND) and 506–588 (TLRV…RLVE).

The protein belongs to the protein kinase superfamily. Ser/Thr protein kinase family. CDC5/Polo subfamily. In terms of assembly, interacts (via POLO box domain) with mex-5 and mex-6. Interacts (via POLO box domain) with him-8 (via N-terminus); the interaction mediates plk-2 recruitment to the pairing region of X chromosomes during meiosis. Interacts with sun-1. May interact with nicotinic acetylcholine receptor. The cofactor is Mg(2+). As to expression, expressed in oocytes.

The protein resides in the nucleus. It is found in the cytoplasm. Its subcellular location is the cytoskeleton. It localises to the microtubule organizing center. The protein localises to the centrosome. The protein resides in the chromosome. It is found in the centromere. Its subcellular location is the kinetochore. It catalyses the reaction L-seryl-[protein] + ATP = O-phospho-L-seryl-[protein] + ADP + H(+). The enzyme catalyses L-threonyl-[protein] + ATP = O-phospho-L-threonyl-[protein] + ADP + H(+). In terms of biological role, serine/threonine-protein kinase which plays a role, during oogenesis, in chromosome pairing and synapsis, by facilitating the recruitment and attachment of meiotic chromosomes to the nuclear envelope during prophase. Promotes the localization of brc-1 to the short arm of homologous chromosomes during meiotic prophase I. Regulates the formation of sun-1 patches along the nuclear envelope. Promotes meiotic nuclei apoptosis in response to chromosomal asynapsis. Plays a redundant role with plk-1 in the establishment of cell polarity downstream of mex-5 and mex-6 during the first embryonic cell divisions. Plays a role in nicotinic acetylcholine receptor-mediated sensitivity to nicotine but not levamisole. Regulates motility. This Caenorhabditis elegans protein is Serine/threonine-protein kinase plk-2.